A 365-amino-acid polypeptide reads, in one-letter code: tRNA N6-adenosine threonylcarbamoyltransferase (365 aa).

Fe cation is bound by residues H122 and H126. Residues 147-151 (LVSGG), D180, G193, and N293 each bind substrate. A Fe cation-binding site is contributed by D321. Positions 340–365 (PNEIDTAARPRWPLSERTPATPEHVS) are disordered.

The protein belongs to the KAE1 / TsaD family. Fe(2+) serves as cofactor.

The protein localises to the cytoplasm. It catalyses the reaction L-threonylcarbamoyladenylate + adenosine(37) in tRNA = N(6)-L-threonylcarbamoyladenosine(37) in tRNA + AMP + H(+). Required for the formation of a threonylcarbamoyl group on adenosine at position 37 (t(6)A37) in tRNAs that read codons beginning with adenine. Is involved in the transfer of the threonylcarbamoyl moiety of threonylcarbamoyl-AMP (TC-AMP) to the N6 group of A37, together with TsaE and TsaB. TsaD likely plays a direct catalytic role in this reaction. In Gluconobacter oxydans (strain 621H) (Gluconobacter suboxydans), this protein is tRNA N6-adenosine threonylcarbamoyltransferase.